We begin with the raw amino-acid sequence, 219 residues long: Large ribosomal subunit protein bL25 (219 aa).

Residues 194–219 form a disordered region; the sequence is SSTELEETPEVPASAVPTTDQGESAE. Residues 209–219 are compositionally biased toward polar residues; sequence VPTTDQGESAE.

Belongs to the bacterial ribosomal protein bL25 family. CTC subfamily. Part of the 50S ribosomal subunit; part of the 5S rRNA/L5/L18/L25 subcomplex. Contacts the 5S rRNA. Binds to the 5S rRNA independently of L5 and L18.

Functionally, this is one of the proteins that binds to the 5S RNA in the ribosome where it forms part of the central protuberance. The polypeptide is Large ribosomal subunit protein bL25 (Legionella pneumophila (strain Paris)).